Reading from the N-terminus, the 293-residue chain is Ribosomal RNA small subunit methyltransferase A (293 aa).

The S-adenosyl-L-methionine site is built by asparagine 38, valine 40, glycine 65, glutamate 86, aspartate 116, and asparagine 135.

This sequence belongs to the class I-like SAM-binding methyltransferase superfamily. rRNA adenine N(6)-methyltransferase family. RsmA subfamily.

It localises to the cytoplasm. It catalyses the reaction adenosine(1518)/adenosine(1519) in 16S rRNA + 4 S-adenosyl-L-methionine = N(6)-dimethyladenosine(1518)/N(6)-dimethyladenosine(1519) in 16S rRNA + 4 S-adenosyl-L-homocysteine + 4 H(+). In terms of biological role, specifically dimethylates two adjacent adenosines (A1518 and A1519) in the loop of a conserved hairpin near the 3'-end of 16S rRNA in the 30S particle. May play a critical role in biogenesis of 30S subunits. The sequence is that of Ribosomal RNA small subunit methyltransferase A from Nocardia farcinica (strain IFM 10152).